The chain runs to 346 residues: tRNA N6-adenosine threonylcarbamoyltransferase (346 aa).

Fe cation-binding residues include histidine 111 and histidine 115. Residues 134–138 (LVSGG), aspartate 167, glycine 180, and asparagine 279 contribute to the substrate site. Aspartate 307 contributes to the Fe cation binding site.

Belongs to the KAE1 / TsaD family. It depends on Fe(2+) as a cofactor.

It is found in the cytoplasm. The enzyme catalyses L-threonylcarbamoyladenylate + adenosine(37) in tRNA = N(6)-L-threonylcarbamoyladenosine(37) in tRNA + AMP + H(+). Required for the formation of a threonylcarbamoyl group on adenosine at position 37 (t(6)A37) in tRNAs that read codons beginning with adenine. Is involved in the transfer of the threonylcarbamoyl moiety of threonylcarbamoyl-AMP (TC-AMP) to the N6 group of A37, together with TsaE and TsaB. TsaD likely plays a direct catalytic role in this reaction. This chain is tRNA N6-adenosine threonylcarbamoyltransferase, found in Burkholderia thailandensis (strain ATCC 700388 / DSM 13276 / CCUG 48851 / CIP 106301 / E264).